Reading from the N-terminus, the 136-residue chain is Large ribosomal subunit protein eL27 (136 aa).

In terms of domain architecture, KOW spans 5–40 (MKPGKVVLVLAGRYSGRKAVIVKNIDDGTSDRPYSH). Lysine 27 and lysine 93 each carry N6-acetyllysine.

The protein belongs to the eukaryotic ribosomal protein eL27 family. As to quaternary structure, component of the large ribosomal subunit. Interacts with RRP1B. Component of the large ribosomal subunit. Interacts with RRP1B. Interacts with DHX33.

It localises to the cytoplasm. The protein resides in the cytosol. The protein localises to the rough endoplasmic reticulum. Component of the large ribosomal subunit. Required for proper rRNA processing and maturation of 28S and 5.8S rRNAs. This chain is Large ribosomal subunit protein eL27 (RPL27), found in Canis lupus familiaris (Dog).